The primary structure comprises 2193 residues: Genome polyprotein (2193 aa).

Positions 1 to 22 (MGSQVSTQRSGSHENSNSATEG) are disordered. Gly-2 carries the N-myristoyl glycine; by host lipid modification. The Cytoplasmic segment spans residues 2–1503 (GSQVSTQRSG…HLNRAVLVMQ (1502 aa)). Residues 568 to 588 (RVADVIESSIGDSVSRALTQA) form an amphipathic alpha-helix region. Catalysis depends on for protease 2A activity residues His-883 and Asp-901. Positions 918 and 920 each coordinate Zn(2+). Residue Cys-972 is the For protease 2A activity of the active site. 2 residues coordinate Zn(2+): Cys-978 and His-980. Residues 1216-1374 (EKRMNNYMQF…SKTDLGRLDA (159 aa)) enclose the SF3 helicase domain. 1240 to 1247 (GSPGTGKS) serves as a coordination point for ATP. The Zn(2+) site is built by Cys-1381, Cys-1392, and Cys-1397. Residues 1381–1397 (CSENNTANFKRCSPLVC) form a C4-type; degenerate zinc finger. The stretch at 1504 to 1519 (SIATVVAVVSLVYVIY) is an intramembrane region. At 1520–2193 (KLFAGFQGAY…NLRRNWLELF (674 aa)) the chain is on the cytoplasmic side. Tyr-1529 is modified (O-(5'-phospho-RNA)-tyrosine). Residues 1549-1727 (GPSLDFALSL…FCAGLKRSYF (179 aa)) form the Peptidase C3 domain. Catalysis depends on for protease 3C activity residues His-1588, Glu-1619, and Cys-1695. Residues 1958–2073 (GSLFAFDYSG…ASYPFPIDCL (116 aa)) form the RdRp catalytic domain. The Mg(2+) site is built by Asp-1964 and Asp-2060.

This sequence belongs to the picornaviruses polyprotein family. Interacts with capsid protein VP1 and capsid protein VP3 to form heterotrimeric protomers. In terms of assembly, interacts with capsid protein VP0, and capsid protein VP3 to form heterotrimeric protomers. Five protomers subsequently associate to form pentamers which serve as building blocks for the capsid. Interacts with capsid protein VP2, capsid protein VP3 and capsid protein VP4 following cleavage of capsid protein VP0. Interacts with host SCARB2. Interacts with host ARF6; this interaction mediates viral endocytosis. As to quaternary structure, interacts with capsid protein VP1 and capsid protein VP3 in the mature capsid. Interacts with host SCARB2. Interacts with capsid protein VP0 and capsid protein VP1 to form heterotrimeric protomers. Five protomers subsequently associate to form pentamers which serve as building blocks for the capsid. Interacts with capsid protein VP4 in the mature capsid. Interacts with protein 2C; this interaction may be important for virion morphogenesis. In terms of assembly, interacts with capsid protein VP1 and capsid protein VP3. As to quaternary structure, homodimer. Interacts with host BAX; this interaction activates the mitochondrial apoptotic pathway. Interacts with host ILF2. In terms of assembly, homohexamer; forms a hexameric ring structure with 6-fold symmetry characteristic of AAA+ ATPases. Interacts (via N-terminus) with host RTN3 (via reticulon domain); this interaction is important for viral replication. Interacts with capsid protein VP3; this interaction may be important for virion morphogenesis. As to quaternary structure, interacts with protein 3CD. Homodimer. Interacts with host GBF1. Interacts (via GOLD domain) with host ACBD3 (via GOLD domain); this interaction allows the formation of a viral protein 3A/ACBD3 heterotetramer with a 2:2 stoichiometry, which will stimulate the recruitment of host PI4KB in order to synthesize PI4P at the viral RNA replication sites. In terms of assembly, interacts with RNA-directed RNA polymerase. As to quaternary structure, interacts with host IFIH1/MDA5; this interaction inhibits host IFIH1. Interacts with protein 3AB and with RNA-directed RNA polymerase. In terms of assembly, interacts with Viral protein genome-linked and with protein 3CD. Requires Mg(2+) as cofactor. Post-translationally, specific enzymatic cleavages in vivo by the viral proteases yield processing intermediates and the mature proteins. Myristoylation is required for the formation of pentamers during virus assembly. Further assembly of 12 pentamers and a molecule of genomic RNA generates the provirion. In terms of processing, during virion maturation, immature virions are rendered infectious following cleavage of VP0 into VP4 and VP2. This maturation seems to be an autocatalytic event triggered by the presence of RNA in the capsid and it is followed by a conformational change infectious virion. Post-translationally, myristoylation is required during RNA encapsidation and formation of the mature virus particle. VPg is uridylylated by the polymerase into VPg-pUpU. This acts as a nucleotide-peptide primer for the genomic RNA replication.

It localises to the virion. It is found in the host cytoplasm. The protein resides in the host cytoplasmic vesicle membrane. Its subcellular location is the host nucleus. The catalysed reaction is a ribonucleoside 5'-triphosphate + H2O = a ribonucleoside 5'-diphosphate + phosphate + H(+). It carries out the reaction Selective cleavage of Tyr-|-Gly bond in the picornavirus polyprotein.. It catalyses the reaction RNA(n) + a ribonucleoside 5'-triphosphate = RNA(n+1) + diphosphate. The enzyme catalyses Selective cleavage of Gln-|-Gly bond in the poliovirus polyprotein. In other picornavirus reactions Glu may be substituted for Gln, and Ser or Thr for Gly.. Replication or transcription is subject to high level of random mutations by the nucleotide analog ribavirin. Functionally, forms an icosahedral capsid of pseudo T=3 symmetry with capsid proteins VP2 and VP3. The capsid is 300 Angstroms in diameter, composed of 60 copies of each capsid protein and enclosing the viral positive strand RNA genome. Capsid protein VP1 mainly forms the vertices of the capsid. Capsid protein VP1, together with VP2, interacts with host cell receptor SCARB2 to provide virion attachment to target host cells. This attachment induces virion internalization. After binding to its receptor, the capsid undergoes conformational changes. Capsid protein VP1 N-terminus (that contains an amphipathic alpha-helix) and capsid protein VP4 are externalized. Together, they shape a pore in the host membrane through which viral genome is translocated to host cell cytoplasm. In terms of biological role, forms an icosahedral capsid of pseudo T=3 symmetry with capsid proteins VP2 and VP3. The capsid is 300 Angstroms in diameter, composed of 60 copies of each capsid protein and enclosing the viral positive strand RNA genome. Capsid protein VP2, together with VP1, interacts with host cell receptor SCARB2 to provide virion attachment to target host cells. Forms an icosahedral capsid of pseudo T=3 symmetry with capsid proteins VP2 and VP3. The capsid is 300 Angstroms in diameter, composed of 60 copies of each capsid protein and enclosing the viral positive strand RNA genome. Its function is as follows. Lies on the inner surface of the capsid shell. After binding to the host receptor, the capsid undergoes conformational changes. Capsid protein VP4 is released, Capsid protein VP1 N-terminus is externalized, and together, they shape a pore in the host membrane through which the viral genome is translocated into the host cell cytoplasm. Functionally, component of immature procapsids, which is cleaved into capsid proteins VP4 and VP2 after maturation. Allows the capsid to remain inactive before the maturation step. In terms of biological role, cysteine protease that cleaves viral polyprotein and specific host proteins. It is responsible for the autocatalytic cleavage between the P1 and P2 regions, which is the first cleavage occurring in the polyprotein. Also cleaves the host translation initiation factor EIF4G1, in order to shut down the capped cellular mRNA translation. Inhibits the host nucleus-cytoplasm protein and RNA trafficking by cleaving host members of the nuclear pores. Counteracts stress granule formation probably by antagonizing its assembly or promoting its dissassembly. Cleaves and inhibits host IFIH1/MDA5, thereby inhibiting the type-I IFN production and the establishment of the antiviral state. Cleaves and inhibits host MAVS, thereby inhibiting the type-I IFN production and the establishment of the antiviral state. Plays an essential role in the virus replication cycle by acting as a viroporin. Creates a pore in the host endoplasmic reticulum and as a consequence releases Ca2+ in the cytoplasm of infected cell. In turn, high levels of cytoplasmic calcium may trigger membrane trafficking and transport of viral ER-associated proteins to viroplasms, sites of viral genome replication. Its function is as follows. Induces and associates with structural rearrangements of intracellular membranes. Displays RNA-binding, nucleotide binding and NTPase activities. May play a role in virion morphogenesis and viral RNA encapsidation by interacting with the capsid protein VP3. Functionally, localizes the viral replication complex to the surface of membranous vesicles. Together with protein 3CD binds the Cis-Active RNA Element (CRE) which is involved in RNA synthesis initiation. Acts as a cofactor to stimulate the activity of 3D polymerase, maybe through a nucleid acid chaperone activity. In terms of biological role, localizes the viral replication complex to the surface of membranous vesicles. It inhibits host cell endoplasmic reticulum-to-Golgi apparatus transport and causes the disassembly of the Golgi complex, possibly through GBF1 interaction. This would result in depletion of MHC, trail receptors and IFN receptors at the host cell surface. Plays an essential role in viral RNA replication by recruiting ACBD3 and PI4KB at the viral replication sites, thereby allowing the formation of the rearranged membranous structures where viral replication takes place. Acts as a primer for viral RNA replication and remains covalently bound to viral genomic RNA. VPg is uridylylated prior to priming replication into VPg-pUpU. The oriI viral genomic sequence may act as a template for this. The VPg-pUpU is then used as primer on the genomic RNA poly(A) by the RNA-dependent RNA polymerase to replicate the viral genome. During genome replication, the VPg-RNA linkage is removed by the host TDP2, thereby accelerating replication. During the late stage of the replication cycle, host TDP2 is excluded from sites of viral RNA synthesis and encapsidation, allowing for the generation of progeny virions. Its function is as follows. Involved in the viral replication complex and viral polypeptide maturation. It exhibits protease activity with a specificity and catalytic efficiency that is different from protease 3C. Protein 3CD lacks polymerase activity. Protein 3CD binds to the 5'UTR of the viral genome. Functionally, major viral protease that mediates proteolytic processing of the polyprotein. Cleaves host EIF5B, contributing to host translation shutoff. Also cleaves host PABPC1, contributing to host translation shutoff. Disassembles host cytoplasmic stress granules by cleaving host G3BP1, although this effect is less prononced than the inhibition induced by protease 2A. Cleaves host RIGI and thus contributes to the inhibition of type I interferon production. Cleaves host IRF7 and thus contributes to the inhibition of type I interferon production. Cleaves host HNRNPA1 thereby increasing the translation of apoptosis protease activating factor APAF1, leading to apoptosis of the host cell. Cleaves host NLRP1, triggers host N-glycine-mediated degradation of the autoinhibitory NLRP1 N-terminal fragment. In terms of biological role, replicates the viral genomic RNA on the surface of intracellular membranes. May form linear arrays of subunits that propagate along a strong head-to-tail interaction called interface-I. Covalently attaches UMP to a tyrosine of VPg, which is used to prime RNA synthesis. The positive stranded RNA genome is first replicated at virus induced membranous vesicles, creating a dsRNA genomic replication form. This dsRNA is then used as template to synthesize positive stranded RNA genomes. ss(+)RNA genomes are either translated, replicated or encapsidated. This chain is Genome polyprotein, found in Human enterovirus 71 (strain 7423/MS/87) (EV71).